Consider the following 186-residue polypeptide: Elongation factor P (186 aa).

It belongs to the elongation factor P family.

The protein resides in the cytoplasm. The protein operates within protein biosynthesis; polypeptide chain elongation. In terms of biological role, involved in peptide bond synthesis. Stimulates efficient translation and peptide-bond synthesis on native or reconstituted 70S ribosomes in vitro. Probably functions indirectly by altering the affinity of the ribosome for aminoacyl-tRNA, thus increasing their reactivity as acceptors for peptidyl transferase. This Shewanella halifaxensis (strain HAW-EB4) protein is Elongation factor P.